A 633-amino-acid polypeptide reads, in one-letter code: Biosynthetic arginine decarboxylase (633 aa).

Lys-101 is subject to N6-(pyridoxal phosphate)lysine. 284–294 (VDVGGGLGVDY) is a substrate binding site.

The protein belongs to the Orn/Lys/Arg decarboxylase class-II family. SpeA subfamily. The cofactor is Mg(2+). Requires pyridoxal 5'-phosphate as cofactor.

The enzyme catalyses L-arginine + H(+) = agmatine + CO2. The protein operates within amine and polyamine biosynthesis; agmatine biosynthesis; agmatine from L-arginine: step 1/1. Its function is as follows. Catalyzes the biosynthesis of agmatine from arginine. In Aeromonas salmonicida (strain A449), this protein is Biosynthetic arginine decarboxylase.